The chain runs to 131 residues: Phosphoribosyl-AMP cyclohydrolase (131 aa).

Position 78 (Asp-78) interacts with Mg(2+). Position 79 (Cys-79) interacts with Zn(2+). Residues Asp-80 and Asp-82 each coordinate Mg(2+). Residues Cys-96 and Cys-103 each coordinate Zn(2+).

Belongs to the PRA-CH family. In terms of assembly, homodimer. Requires Mg(2+) as cofactor. Zn(2+) is required as a cofactor.

It localises to the cytoplasm. The enzyme catalyses 1-(5-phospho-beta-D-ribosyl)-5'-AMP + H2O = 1-(5-phospho-beta-D-ribosyl)-5-[(5-phospho-beta-D-ribosylamino)methylideneamino]imidazole-4-carboxamide. It participates in amino-acid biosynthesis; L-histidine biosynthesis; L-histidine from 5-phospho-alpha-D-ribose 1-diphosphate: step 3/9. Functionally, catalyzes the hydrolysis of the adenine ring of phosphoribosyl-AMP. In Neisseria meningitidis serogroup A / serotype 4A (strain DSM 15465 / Z2491), this protein is Phosphoribosyl-AMP cyclohydrolase.